Here is a 706-residue protein sequence, read N- to C-terminus: Elongation factor G (706 aa).

In terms of domain architecture, tr-type G spans 8 to 290; it reads KRYRNIGIVA…GVIEYMPSPT (283 aa). GTP contacts are provided by residues 17–24, 88–92, and 142–145; these read AHVDAGKT, DTPGH, and NKMD.

It belongs to the TRAFAC class translation factor GTPase superfamily. Classic translation factor GTPase family. EF-G/EF-2 subfamily.

It is found in the cytoplasm. Its function is as follows. Catalyzes the GTP-dependent ribosomal translocation step during translation elongation. During this step, the ribosome changes from the pre-translocational (PRE) to the post-translocational (POST) state as the newly formed A-site-bound peptidyl-tRNA and P-site-bound deacylated tRNA move to the P and E sites, respectively. Catalyzes the coordinated movement of the two tRNA molecules, the mRNA and conformational changes in the ribosome. This chain is Elongation factor G, found in Chromohalobacter salexigens (strain ATCC BAA-138 / DSM 3043 / CIP 106854 / NCIMB 13768 / 1H11).